A 273-amino-acid polypeptide reads, in one-letter code: Tryptophan synthase alpha chain (273 aa).

Catalysis depends on proton acceptor residues Glu49 and Asp60.

The protein belongs to the TrpA family. Tetramer of two alpha and two beta chains.

The enzyme catalyses (1S,2R)-1-C-(indol-3-yl)glycerol 3-phosphate + L-serine = D-glyceraldehyde 3-phosphate + L-tryptophan + H2O. It functions in the pathway amino-acid biosynthesis; L-tryptophan biosynthesis; L-tryptophan from chorismate: step 5/5. The alpha subunit is responsible for the aldol cleavage of indoleglycerol phosphate to indole and glyceraldehyde 3-phosphate. The chain is Tryptophan synthase alpha chain from Halorhodospira halophila (strain DSM 244 / SL1) (Ectothiorhodospira halophila (strain DSM 244 / SL1)).